The primary structure comprises 1129 residues: Protein TPR1 (1129 aa).

The 33-residue stretch at 4 to 36 folds into the LisH domain; the sequence is LSRELVFLILQFLDEEKFKETVHKLEQESGFFF. Residues 34 to 92 enclose the CTLH domain; it reads FFFNMKYFEEKVHAGEWDEVEKYLSGFTKVDDNRYSMKIFFEIRKQKYLEALDRHDRAK. WD repeat units lie at residues 337–377, 398–437, 443–485, 487–527, 579–618, 623–662, 762–801, 829–867, 870–910, 913–952, and 1005–1044; these read SQGS…RLFS, ESSI…ETRQ, AHSG…FSFE, HEAP…SRVD, KKSA…MLSS, GGLP…RTLR, DQAS…QNPS, NPED…VMTT, PPPP…VKTR, GHQR…KKKS, and ALSA…LRCR. The disordered stretch occupies residues 1092-1129; sequence LESEGKWGTTPPTENGVPNGRTSTSSATSNPAADQIQR. Low complexity predominate over residues 1113–1129; that stretch reads TSTSSATSNPAADQIQR.

Tetramer. Interacts with D53. Interacts with WOX1. Interacts with MOF1. As to expression, expressed in panicles, stems, leaves, spikelets and seed endosperm.

Its function is as follows. Probable downstream regulator of strigolactones signaling. This chain is Protein TPR1, found in Oryza sativa subsp. japonica (Rice).